Reading from the N-terminus, the 229-residue chain is MAKKSKALRAAIEKIDATKAYSVEEAVALAKETSFAKFDATVEVAYNLNIDVKKSDQQIRGAMVLPNGTGKTARVLVFAKGAKAEEATAAGADFVGSDELVAKINGGWLDFDVVIATPDMMAVVGRLGRVLGPRNLMPNPKTGTVTMDVTKAVGESKAGKVNYRADKAGNVHVPIGKVSFDTEKLVENFKALNTVIAAAKPAASKGAYITNLSVTTTMGPGVKVDSASF.

It belongs to the universal ribosomal protein uL1 family. Part of the 50S ribosomal subunit.

In terms of biological role, binds directly to 23S rRNA. The L1 stalk is quite mobile in the ribosome, and is involved in E site tRNA release. Functionally, protein L1 is also a translational repressor protein, it controls the translation of the L11 operon by binding to its mRNA. The sequence is that of Large ribosomal subunit protein uL1 from Lactococcus lactis subsp. cremoris (strain MG1363).